The following is a 720-amino-acid chain: Hexanoyl-CoA synthase (720 aa).

Residues 242–262 form a helical membrane-spanning segment; the sequence is VDAVVIYLAIVLAGYVVVSIA. Position 290-293 (290-293) interacts with CoA; the sequence is RGKK. ATP-binding positions include 477 to 479, 499 to 504, Glu-585, and Arg-607; these read GEA and EMCGGT. Gly-615 contacts CoA. Residue Lys-618 coordinates ATP. Gln-681 provides a ligand contact to CoA.

It belongs to the ATP-dependent AMP-binding enzyme family. The cofactor is Mg(2+). As to expression, accumulates in glandular trichomes, especially in female flowers. Present at low levels in roots, stems and leaves.

It is found in the cytoplasm. Its subcellular location is the cytosol. It localises to the membrane. It catalyses the reaction hexanoate + ATP + CoA = hexanoyl-CoA + AMP + diphosphate. It functions in the pathway secondary metabolite biosynthesis; terpenoid biosynthesis. Its activity is regulated as follows. Inhibitied by high CoA concentrations. Functionally, involved in the biosynthesis of cannabinoids-related terpenophenolic natural products, which have pharmacological activity. Acyl-activating enzyme that catalyzes the conversion of hexanoic acid to hexanoyl-CoA, precursor of the cannabinoid pathway. Can also activate other fatty acids including heptanoate, octanoate and nonanoate. This is Hexanoyl-CoA synthase from Cannabis sativa (Hemp).